We begin with the raw amino-acid sequence, 3122 residues long: Laminin subunit alpha-2 (3122 aa).

Positions 1 to 22 (MPGAAGVLLLLLLSGGLGGVQA) are cleaved as a signal peptide. Residues 35-286 (QQRGLFPAVL…SVKDISVGGM (252 aa)) enclose the Laminin N-terminal domain. 2 N-linked (GlcNAc...) asparagine glycosylation sites follow: N55 and N89. Intrachain disulfides connect C287–C296, C289–C307, C309–C318, C321–C341, C344–C353, and C346–C378. 4 Laminin EGF-like domains span residues 287 to 343 (CICY…ECEA), 344 to 413 (CNCH…PCQP), 414 to 468 (CHCD…DCKA), and 469 to 517 (CNCS…GCDE). The N-linked (GlcNAc...) asparagine glycan is linked to N303. Residues N363 and N380 are each glycosylated (N-linked (GlcNAc...) asparagine). Cystine bridges form between C381/C390, C393/C411, C414/C426, C416/C442, C444/C453, C456/C466, C469/C482, C471/C486, C488/C497, and C500/C515. N470 carries N-linked (GlcNAc...) asparagine glycosylation. The region spanning 518–527 (CFCSGVSNRC) is the Laminin EGF-like 5; first part domain. One can recognise a Laminin IV type A 1 domain in the interval 531-723 (YWTYGKIQDM…DGSIAAAVEV (193 aa)). A Laminin EGF-like 5; second part domain is found at 724–756 (CQCPPGYTGSSCESCWPRHRRVNGTIFGGICEP). N-linked (GlcNAc...) asparagine glycosylation occurs at N746. Cystine bridges form between C757–C766, C759–C773, C776–C785, C788–C804, C807–C822, C809–C832, C835–C844, C847–C862, C865–C879, C867–C886, C889–C898, C901–C915, C918–C930, C920–C937, C939–C948, C951–C964, C967–C979, C969–C985, C987–C996, C999–C1011, C1014–C1023, C1016–C1030, C1032–C1041, C1044–C1057, C1060–C1072, C1062–C1079, C1081–C1090, C1093–C1103, C1106–C1118, C1108–C1134, C1136–C1145, and C1148–C1163. Laminin EGF-like domains follow at residues 757 to 806 (CQCF…DCQP), 807 to 864 (CACP…SCQP), 865 to 917 (CQCN…NCQP), 918 to 966 (CRCN…GCVP), 967 to 1013 (CNCN…GCTA), 1014 to 1059 (CECS…GCKA), 1060 to 1105 (CNCS…RCNL), and 1106 to 1165 (CDCF…GCSS). A glycan (N-linked (GlcNAc...) asparagine) is linked at N1061. The Laminin EGF-like 14; first part domain maps to 1166 to 1175 (CYCFGTTTQC). The 204-residue stretch at 1176–1379 (SEAKGLIRTW…MTPPADLIEK (204 aa)) folds into the Laminin IV type A 2 domain. The Laminin EGF-like 14; second part domain maps to 1380 to 1419 (CDCPLGYSGLSCEACLPGFYRLRSQPGGRTPGPTLGTCVP). 12 cysteine pairs are disulfide-bonded: C1420-C1429, C1422-C1436, C1439-C1448, C1451-C1466, C1469-C1484, C1471-C1494, C1497-C1506, C1509-C1524, C1527-C1539, C1529-C1546, C1548-C1557, and C1560-C1571. 3 consecutive Laminin EGF-like domains span residues 1420 to 1468 (CQCN…DCQQ), 1469 to 1526 (CACP…SCQE), and 1527 to 1573 (CECD…ECVF). The interval 1574–2144 (CGDECTGLLL…NQARKQANSI (571 aa)) is domain II and I. N-linked (GlcNAc...) asparagine glycosylation is found at N1597, N1614, N1700, N1810, N1901, N1916, N1920, N2017, N2028, N2045, N2126, and N2240. Residues 1630–2150 (ERLIQLAEGN…ANSIKVSVSS (521 aa)) are a coiled coil. Laminin G-like domains follow at residues 2145–2328 (KVSV…CKGC), 2340–2521 (TIQF…TKGC), 2526–2710 (VYTV…IGRC), 2763–2934 (SKQF…VGTC), and 2939–3110 (QRGT…KALE). An intrachain disulfide couples C2302 to C2328. N2360, N2435, and N2478 each carry an N-linked (GlcNAc...) asparagine glycan. An intrachain disulfide couples C2495 to C2521. N-linked (GlcNAc...) asparagine glycosylation is found at N2551, N2558, and N2648. A disulfide bond links C2683 and C2710. N-linked (GlcNAc...) asparagine glycans are attached at residues N2868 and N2893. The cysteines at positions 2909 and 2934 are disulfide-linked. Positions 3043-3060 (GNQVEAQSPNPASTSADT) are enriched in polar residues. The interval 3043–3063 (GNQVEAQSPNPASTSADTNDP) is disordered.

Laminin is a complex glycoprotein, consisting of three different polypeptide chains (alpha, beta, gamma), which are bound to each other by disulfide bonds into a cross-shaped molecule comprising one long and three short arms with globules at each end. Alpha-2 is a subunit of laminin-2 (laminin-211 or merosin), laminin-4 (laminin-221 or S-merosin) and laminin-12 (laminin-213). Interacts with FBLN1, FBLN2 and NID2. In terms of tissue distribution, placenta, striated muscle, peripheral nerve, cardiac muscle, pancreas, lung, spleen, kidney, adrenal gland, skin, testis, meninges, choroid plexus, and some other regions of the brain; not in liver, thymus and bone.

It localises to the secreted. It is found in the extracellular space. The protein localises to the extracellular matrix. The protein resides in the basement membrane. Its function is as follows. Binding to cells via a high affinity receptor, laminin is thought to mediate the attachment, migration and organization of cells into tissues during embryonic development by interacting with other extracellular matrix components. The protein is Laminin subunit alpha-2 (LAMA2) of Homo sapiens (Human).